The following is a 99-amino-acid chain: Large ribosomal subunit protein uL23 (99 aa).

This sequence belongs to the universal ribosomal protein uL23 family. As to quaternary structure, part of the 50S ribosomal subunit. Contacts protein L29, and trigger factor when it is bound to the ribosome.

Its function is as follows. One of the early assembly proteins it binds 23S rRNA. One of the proteins that surrounds the polypeptide exit tunnel on the outside of the ribosome. Forms the main docking site for trigger factor binding to the ribosome. The protein is Large ribosomal subunit protein uL23 of Pseudomonas fluorescens (strain SBW25).